Consider the following 114-residue polypeptide: UPF0342 protein SERP1381 (114 aa).

The protein belongs to the UPF0342 family.

The sequence is that of UPF0342 protein SERP1381 from Staphylococcus epidermidis (strain ATCC 35984 / DSM 28319 / BCRC 17069 / CCUG 31568 / BM 3577 / RP62A).